Reading from the N-terminus, the 860-residue chain is Mycobactin import ATP-binding/permease protein IrtA (860 aa).

Topologically, residues 1–293 are cytoplasmic; the sequence is MARGIQGVMM…GRLLAPLKTT (293 aa). Residues 15–124 form the FAD-binding FR-type domain; that stretch reads ARDHQATVVS…LGSAGFSVPE (110 aa). Residues 70-73, 87-91, 97-98, and 238-240 contribute to the FAD site; these read RAYT, DVVLH, AS, and TEG. The disordered stretch occupies residues 242 to 275; the sequence is AMGTKRGDDDKTPEVNPAPRADKPEAPAPAAAGR. The chain crosses the membrane as a helical span at residues 294-314; it reads LIISGVLQAIITLVQLAPFVL. The ABC transmembrane type-1 domain occupies 295 to 577; it reads IISGVLQAII…IAYGLGGIRG (283 aa). Over 315–335 the chain is Periplasmic; the sequence is LVELARLLLSGASSDRLWTLG. The chain crosses the membrane as a helical span at residues 336 to 356; that stretch reads VVAISLLGTGSFLAAALTLWL. The Cytoplasmic portion of the chain corresponds to 357 to 409; that stretch reads HLVDARFARDLRTGLLTKMSRLPLGWFTARGSGSIKQLVQDDTLSLHYLITHA. A helical membrane pass occupies residues 410 to 430; that stretch reads IPDAVAAVIAPVAVLVYLFVV. The Periplasmic segment spans residues 431–433; sequence DWR. The helical transmembrane segment at 434–454 threads the bilayer; it reads LALVMFVPVLIYLVLMTVMTI. At 455 to 525 the chain is on the cytoplasmic side; the sequence is QSGPKIAQSQ…KKSMMDLVTR (71 aa). A helical membrane pass occupies residues 526–546; the sequence is PGTFLWLIVAVGTPMITSGAM. Residues 547 to 550 lie on the Periplasmic side of the membrane; it reads DPVD. A helical membrane pass occupies residues 551–571; it reads ILPFLLLGTTFGVRLLGIAYG. At 572–860 the chain is on the cytoplasmic side; sequence LGGIRGGMLA…AAGPTGEAVR (289 aa). An ABC transporter domain is found at 609–842; that stretch reads VVFDNVTFGY…AGRYRQLWET (234 aa). 642–649 is a binding site for ATP; the sequence is GPSGSGKS.

The protein belongs to the ABC transporter superfamily. Siderophore-Fe(3+) uptake transporter (SIUT) (TC 3.A.1.21) family. Forms a heterodimer with IrtB. The cofactor is FAD.

It is found in the cell inner membrane. Functionally, part of the ABC transporter complex IrtAB involved in the import of iron-bound mycobactin (Fe-MBT) and carboxymycobactin (Fe-cMBT). Has a preference for Fe-MBT over Fe-cMBT. Mycobactins are then reduced by the siderophore interaction domain to facilitate iron release in the bacterial cell. Transmembrane domains (TMD) form a pore in the membrane and the ATP-binding domain (NBD) is responsible for energy generation. The protein is Mycobactin import ATP-binding/permease protein IrtA of Mycolicibacterium smegmatis (strain ATCC 700084 / mc(2)155) (Mycobacterium smegmatis).